Here is a 286-residue protein sequence, read N- to C-terminus: ATP synthase gamma chain (286 aa).

Belongs to the ATPase gamma chain family. As to quaternary structure, F-type ATPases have 2 components, CF(1) - the catalytic core - and CF(0) - the membrane proton channel. CF(1) has five subunits: alpha(3), beta(3), gamma(1), delta(1), epsilon(1). CF(0) has three main subunits: a, b and c.

The protein resides in the cell membrane. In terms of biological role, produces ATP from ADP in the presence of a proton gradient across the membrane. The gamma chain is believed to be important in regulating ATPase activity and the flow of protons through the CF(0) complex. This chain is ATP synthase gamma chain, found in Bacillus anthracis (strain A0248).